Reading from the N-terminus, the 158-residue chain is MVQIWQMEPYPCGDPRLPHHLFPPKKITPDELSKRTGTLYWKLDTLDQVALAKRLTTLKLEHSFKKEDIFTLDAETTANFDDKIEELFEESSVPFEQARMIIEGTAYYDVEDKNGQWVRIFCEYGDLILIPANTCFRFTTTPHNFVKMRRFYKDEDSE.

The protein belongs to the acireductone dioxygenase (ARD) family.

It localises to the cytoplasm. Its subcellular location is the nucleus. In terms of biological role, probable inactive acireductone dioxygenase. This Caenorhabditis elegans protein is Probable inactive acireductone dioxygenase 2.